The chain runs to 1062 residues: Cell division control protein 7 (1062 aa).

The Protein kinase domain occupies 9–259 (ITLGDCLGKG…TRKLLKHPWV (251 aa)). Residues 15 to 23 (LGKGAFGAV) and lysine 38 contribute to the ATP site. Aspartate 131 functions as the Proton acceptor in the catalytic mechanism. Composition is skewed to polar residues over residues 296–310 (NRIN…QSSY) and 376–394 (AFNS…SPLS). Disordered stretches follow at residues 296–331 (NRIN…NWDN), 361–394 (NNSS…SPLS), and 1038–1062 (NEHK…PLTQ).

It belongs to the protein kinase superfamily. Ser/Thr protein kinase family. CDC7 subfamily. Interacts with spg1. Seems to interact with cdc11. Mg(2+) is required as a cofactor.

It carries out the reaction L-seryl-[protein] + ATP = O-phospho-L-seryl-[protein] + ADP + H(+). The catalysed reaction is L-threonyl-[protein] + ATP = O-phospho-L-threonyl-[protein] + ADP + H(+). Its function is as follows. Protein kinase essential for cell division. Plays a key role in initiation of septum formation and cytokinesis. This is Cell division control protein 7 (cdc7) from Schizosaccharomyces pombe (strain 972 / ATCC 24843) (Fission yeast).